Here is a 2920-residue protein sequence, read N- to C-terminus: Cadherin-related hmr-1 (2920 aa).

The first 19 residues, 1 to 19, serve as a signal peptide directing secretion; that stretch reads MSWNILLILLISNLDEVLA. Topologically, residues 20-2779 are extracellular; it reads KTLLKLPSNA…AVSKLGISSP (2760 aa). Asn72, Asn243, Asn253, Asn339, and Asn508 each carry an N-linked (GlcNAc...) asparagine glycan. Cadherin domains are found at residues 322–422, 425–530, 531–642, 643–747, 749–865, 871–979, 980–1093, 1097–1211, 1212–1335, 1336–1436, 1438–1546, 1548–1661, 1662–1772, and 1772–1874; these read SSRS…PPSF, SPLP…PPQF, AKQE…VPTF, TRPL…SAVF, PTSQ…KPEF, YSDI…SPQF, ERPS…APKW, PDCK…VPQF, TVDL…APSF, EEQK…APQF, QQKY…SPIF, ERLF…APFF, EKTR…APHI, and IHGA…EPYT. Residues Asn658, Asn685, Asn715, and Asn826 are each glycosylated (N-linked (GlcNAc...) asparagine). Asn1177 is a glycosylation site (N-linked (GlcNAc...) asparagine). Asn1417 carries N-linked (GlcNAc...) asparagine glycosylation. N-linked (GlcNAc...) asparagine glycosylation occurs at Asn1646. 3 N-linked (GlcNAc...) asparagine glycosylation sites follow: Asn1935, Asn2224, and Asn2232. The EGF-like 1 domain maps to 2246–2283; the sequence is APPACQHSLCHNDGVCHNTNPGFFCECRNDGLKGARCQ. Disulfide bonds link Cys2250-Cys2261, Cys2255-Cys2270, and Cys2272-Cys2282. The Laminin G-like domain occupies 2284–2478; it reads GTTRSFGGNG…AFEQNSEKGC (195 aa). N-linked (GlcNAc...) asparagine glycans are attached at residues Asn2307 and Asn2332. 3 disulfide bridges follow: Cys2452–Cys2478, Cys2501–Cys2515, and Cys2517–Cys2526. The EGF-like 2 domain occupies 2492-2527; it reads SLNHCIHGDCFADVQGSGAMVAKCVCDPGWGGARCE. N-linked (GlcNAc...) asparagine glycosylation is present at Asn2623. Residues 2780–2800 traverse the membrane as a helical segment; the sequence is AIILILVSLALLILLVMMMVV. At 2801–2920 the chain is on the cytoplasmic side; it reads YTRRSPGAFE…VTLESIESAQ (120 aa). Ser2839 bears the Phosphoserine mark. Residues 2858 to 2891 are disordered; that stretch reads IGGHPPHYPPRGMAPPKDDHELNSKIKDLETDQN. Residues 2873-2887 show a composition bias toward basic and acidic residues; sequence PKDDHELNSKIKDLE. At Ser2909 the chain carries Phosphoserine. Thr2912 is modified (phosphothreonine). Ser2915 and Ser2918 each carry phosphoserine.

In terms of assembly, monomer in solution. Isoform a is a component of a core catenin-cadherin complex consisting of hmr-1, hmp-1 and hmp-2; the complex localizes to adherens junctions. Isoform a interacts with hmp-2; the interaction is direct. Isoform a interacts (via intracellular domain) with jac-1. Phosphorylation at T-2912 increases the binding affinity for hmp-2. In terms of processing, sumoylated. Sumoylation prevents accumulation at adherens junctions and decreases the binding affinity for hmp-2. As to expression, expressed in epidermal cells (at protein level). Neuron-specific.

It is found in the cell membrane. Its subcellular location is the cell junction. The protein resides in the adherens junction. It localises to the cell projection. The protein localises to the dendrite. Cadherins are calcium-dependent cell adhesion proteins. They preferentially interact with themselves in a homophilic manner in connecting cells; cadherins may thus contribute to the sorting of heterogeneous cell types. Required for adherens junction assembly and connecting adherens junctions to the cytoskeleton. In terms of biological role, isoform a is required for cell migration during body enclosure and cell shape changes during body elongation. Required for proper localization of other junctional components, such as hmp-1, hmp-2, jac-1 and pac-1. Recruitment of pac-1 is required to establish cell polarity, independent of its role in cell adhesion. Required for primodial germ cell ingression and adherence to endodermal cells during gastrulation. Its function is as follows. Isoform b is involved in axonal guidance in a subset of motor neurons. The sequence is that of Cadherin-related hmr-1 from Caenorhabditis elegans.